The chain runs to 204 residues: CASP-like protein 1U3 (204 aa).

Residues M1–N19 are Cytoplasmic-facing. Residues L20–A40 form a helical membrane-spanning segment. The Extracellular segment spans residues S41–P63. Residues F64–L84 traverse the membrane as a helical segment. The Cytoplasmic portion of the chain corresponds to T85–V97. The helical transmembrane segment at L98 to F118 threads the bilayer. Topologically, residues A119–Q146 are extracellular. A helical membrane pass occupies residues V147–V167. Residues K168–H204 are Cytoplasmic-facing. A disordered region spans residues S173–H204.

It belongs to the Casparian strip membrane proteins (CASP) family. As to quaternary structure, homodimer and heterodimers.

The protein resides in the cell membrane. The chain is CASP-like protein 1U3 from Oryza sativa subsp. japonica (Rice).